The chain runs to 203 residues: E3 ubiquitin-protein ligase RNF152 (203 aa).

The segment at 12 to 55 adopts an RING-type zinc-finger fold; sequence CQICFNYYSPRRRPKLLDCKHTCCSVCLQQMRTSQKDVRCPWCR. The tract at residues 106–165 is necessary for interaction with RRAGA; it reads ISKERTLLPGDMGCRLLPGSQQKSLTVVTIPAEQQPLQGGAPPEAVEEEPDRRGVVKSST. The disordered stretch occupies residues 139-158; sequence QQPLQGGAPPEAVEEEPDRR. Residues 167–187 form a helical membrane-spanning segment; that stretch reads SGVCTVILVACVLVFLLGIVL.

This sequence belongs to the RNF152 family. As to quaternary structure, interacts with RRAGA (inactive GDP-bound form); stimulated by amino acid starvation. Interacts with SEC16A. Post-translationally, ubiquitinated. Autoubiquitinated in vitro, leading to its degradation by the proteasome.

The protein localises to the lysosome membrane. It carries out the reaction S-ubiquitinyl-[E2 ubiquitin-conjugating enzyme]-L-cysteine + [acceptor protein]-L-lysine = [E2 ubiquitin-conjugating enzyme]-L-cysteine + N(6)-ubiquitinyl-[acceptor protein]-L-lysine.. Its pathway is protein modification; protein ubiquitination. E3 ubiquitin-protein ligase that acts as a negative regulator of mTORC1 signaling by mediating ubiquitination of RagA/RRAGA and RHEB. Catalyzes 'Lys-63'-linked polyubiquitination of RagA/RRAGA in response to amino acid starvation, thereby regulating mTORC1 signaling. Also mediates monoubiquitination of RHEB, promoting its association with the TSC-TBC complex and subsequent inhibition. Also mediates 'Lys-48'-linked polyubiquitination of target proteins and their subsequent targeting to the proteasome for degradation. Induces apoptosis when overexpressed. The chain is E3 ubiquitin-protein ligase RNF152 from Mus musculus (Mouse).